The sequence spans 199 residues: Transgelin-3 (199 aa).

The 113-residue stretch at 24 to 136 folds into the Calponin-homology (CH) domain; that stretch reads ADLENKLVDW…RTLMALGSVA (113 aa). Phosphoserine is present on Ser163. A Calponin-like repeat occupies 174–199; the sequence is IGLQMGSNKGASQAGMTGYGMPRQIM. Residues 176–188 show a composition bias toward polar residues; the sequence is LQMGSNKGASQAG. The disordered stretch occupies residues 176–199; that stretch reads LQMGSNKGASQAGMTGYGMPRQIM.

This sequence belongs to the calponin family. In terms of tissue distribution, widely expressed in the brain. Expression is increased in the superior frontal cortex of alcoholics, but not in the motor cortex or cerebellum.

The chain is Transgelin-3 (TAGLN3) from Homo sapiens (Human).